Here is a 76-residue protein sequence, read N- to C-terminus: Omega-conotoxin-like TeA61 (76 aa).

An N-terminal signal peptide occupies residues 1-22; that stretch reads MKLTCMMIVAVLFLTAWTFATA. Residues 23-51 constitute a propeptide that is removed on maturation; it reads DDSSNGLGNLFLKAHHEMKNPEASKLNER. Intrachain disulfides connect Cys52/Cys67, Cys59/Cys70, and Cys66/Cys75.

This sequence belongs to the conotoxin O1 superfamily. As to expression, expressed by the venom duct.

The protein localises to the secreted. Its function is as follows. Omega-conotoxins act at presynaptic membranes, they bind and block voltage-gated calcium channels (Cav). The chain is Omega-conotoxin-like TeA61 from Conus textile (Cloth-of-gold cone).